Here is a 278-residue protein sequence, read N- to C-terminus: Tryptophan synthase alpha chain (278 aa).

Active-site proton acceptor residues include Glu49 and Asp60.

The protein belongs to the TrpA family. In terms of assembly, tetramer of two alpha and two beta chains.

The enzyme catalyses (1S,2R)-1-C-(indol-3-yl)glycerol 3-phosphate + L-serine = D-glyceraldehyde 3-phosphate + L-tryptophan + H2O. The protein operates within amino-acid biosynthesis; L-tryptophan biosynthesis; L-tryptophan from chorismate: step 5/5. Its function is as follows. The alpha subunit is responsible for the aldol cleavage of indoleglycerol phosphate to indole and glyceraldehyde 3-phosphate. This is Tryptophan synthase alpha chain from Corynebacterium diphtheriae (strain ATCC 700971 / NCTC 13129 / Biotype gravis).